A 66-amino-acid chain; its full sequence is Cysteine proteinase inhibitor (66 aa).

Residues 18-22 (QVVAG) carry the Secondary area of contact motif.

Belongs to the cystatin family. Phytocystatin subfamily. In tubers of untreated plants. After ABA treatment or mechanical wounding is mostly accumulated in leaves, to a lesser extent in stems, but not in roots.

This Solanum tuberosum (Potato) protein is Cysteine proteinase inhibitor (CYS-PIN).